The sequence spans 349 residues: Pseudouridylate synthase TRUB1 (349 aa).

Ala2 is modified (N-acetylalanine). A Phosphoserine modification is found at Ser11. Asp121 (nucleophile) is an active-site residue.

Belongs to the pseudouridine synthase TruB family. In terms of tissue distribution, highly expressed in heart, skeletal muscle and liver. Expressed at lower levels in lung, small intestine, kidney and spleen.

It is found in the nucleus. Its subcellular location is the cytoplasm. It localises to the cytosol. The enzyme catalyses a uridine in mRNA = a pseudouridine in mRNA. It catalyses the reaction a uridine in tRNA = a pseudouridine in tRNA. It carries out the reaction uridine(55) in tRNA = pseudouridine(55) in tRNA. In terms of biological role, pseudouridine synthase that catalyzes pseudouridylation of mRNAs and tRNAs. Mediates pseudouridylation of mRNAs with the consensus sequence 5'-GUUCNANNC-3', harboring a stem-loop structure. Constitutes the major pseudouridine synthase acting on mRNAs. Also catalyzes pseudouridylation of some tRNAs, including synthesis of pseudouridine(55) from uracil-55, in the psi GC loop of a subset of tRNAs. Promotes the processing of pri-let-7 microRNAs (pri-miRNAs) independently of its RNA pseudouridylate synthase activity. Acts by binding to the stem-loop structure on pri-let-7, preventing LIN28-binding (LIN28A and/or LIN28B), thereby enhancing the interaction between pri-let-7 and the microprocessor DGCR8, which mediates miRNA maturation. The chain is Pseudouridylate synthase TRUB1 from Homo sapiens (Human).